The chain runs to 54 residues: UPF0391 membrane protein Rmet_0093 (54 aa).

2 helical membrane-spanning segments follow: residues 5–25 (ALVF…GIAA) and 30–50 (IAKI…VMGL).

This sequence belongs to the UPF0391 family.

Its subcellular location is the cell membrane. This Cupriavidus metallidurans (strain ATCC 43123 / DSM 2839 / NBRC 102507 / CH34) (Ralstonia metallidurans) protein is UPF0391 membrane protein Rmet_0093.